A 190-amino-acid polypeptide reads, in one-letter code: Glutathione peroxidase 2 (190 aa).

Residue U40 is part of the active site. Residue U40 is a non-standard amino acid, selenocysteine.

It belongs to the glutathione peroxidase family. In terms of assembly, homotetramer.

The protein localises to the cytoplasm. It localises to the cytosol. The catalysed reaction is 2 glutathione + H2O2 = glutathione disulfide + 2 H2O. The enzyme catalyses a hydroperoxy polyunsaturated fatty acid + 2 glutathione = a hydroxy polyunsaturated fatty acid + glutathione disulfide + H2O. It carries out the reaction tert-butyl hydroperoxide + 2 glutathione = tert-butanol + glutathione disulfide + H2O. It catalyses the reaction cumene hydroperoxide + 2 glutathione = 2-phenylpropan-2-ol + glutathione disulfide + H2O. The catalysed reaction is (13S)-hydroperoxy-(9Z,11E)-octadecadienoate + 2 glutathione = (13S)-hydroxy-(9Z,11E)-octadecadienoate + glutathione disulfide + H2O. The enzyme catalyses (5S)-hydroperoxy-(6E,8Z,11Z,14Z)-eicosatetraenoate + 2 glutathione = (5S)-hydroxy-(6E,8Z,11Z,14Z)-eicosatetraenoate + glutathione disulfide + H2O. It carries out the reaction (12R)-hydroperoxy-(5Z,8Z,10E,14Z)-eicosatetraenoate + 2 glutathione = (12R)-hydroxy-(5Z,8Z,10E,14Z)-eicosatetraenoate + glutathione disulfide + H2O. It catalyses the reaction (15S)-hydroperoxy-(5Z,8Z,11Z,13E)-eicosatetraenoate + 2 glutathione = (15S)-hydroxy-(5Z,8Z,11Z,13E)-eicosatetraenoate + glutathione disulfide + H2O. Catalyzes the reduction of hydroperoxides in a glutathione-dependent manner thus regulating cellular redox homeostasis. Can reduce small soluble hydroperoxides such as H2O2, cumene hydroperoxide and tert-butyl hydroperoxide, as well as several fatty acid-derived hydroperoxides. Cannot reduce phosphatidycholine hydroperoxide. In Mus musculus (Mouse), this protein is Glutathione peroxidase 2 (Gpx2).